Reading from the N-terminus, the 732-residue chain is Polyribonucleotide nucleotidyltransferase (732 aa).

Positions 503 and 509 each coordinate Mg(2+). The region spanning Pro-570–Ile-629 is the KH domain. Positions Gly-639–Lys-713 constitute an S1 motif domain.

It belongs to the polyribonucleotide nucleotidyltransferase family. It depends on Mg(2+) as a cofactor.

It localises to the cytoplasm. It catalyses the reaction RNA(n+1) + phosphate = RNA(n) + a ribonucleoside 5'-diphosphate. Functionally, involved in mRNA degradation. Catalyzes the phosphorolysis of single-stranded polyribonucleotides processively in the 3'- to 5'-direction. The protein is Polyribonucleotide nucleotidyltransferase of Chlorobium phaeovibrioides (strain DSM 265 / 1930) (Prosthecochloris vibrioformis (strain DSM 265)).